The chain runs to 1615 residues: Regulating synaptic membrane exocytosis protein 1 (1615 aa).

Residues 1 to 26 (MSSAVGPRGPRPPTVPPPMQELPDLS) are disordered. Positions 9–20 (GPRPPTVPPPMQ) are enriched in pro residues. The 184-residue stretch at 22–205 (LPDLSHLTEE…TKSGAWFFGS (184 aa)) folds into the RabBD domain. The segment at 133–193 (KDDAPTCGIC…VCNLCRKQQE (61 aa)) adopts an FYVE-type zinc-finger fold. Positions 139, 142, 155, 158, 163, 166, 185, and 188 each coordinate Zn(2+). The disordered stretch occupies residues 205–569 (SGPQQPSQDG…CEDVELESES (365 aa)). Positions 206 to 222 (GPQQPSQDGTLSDTATG) are enriched in polar residues. Residues 227-240 (VPREKKARLQERSR) show a composition bias toward basic and acidic residues. Residues 241–256 (SQTPLSTAAVSSQDTA) show a composition bias toward polar residues. The segment covering 327 to 379 (ADERERKERRETRRLEKGRSQDYSDRPEKRDNGRVAEDQKQRKEEEYQTRYRS) has biased composition (basic and acidic residues). Positions 399-410 (MHARVSRARHER) are enriched in basic residues. The segment covering 421–459 (EAAAAAPAEATAGKRAPATARVSPPESPRARAAAAQPPT) has biased composition (low complexity). Residues 460-475 (EHGPPPPRPAPGPAEP) show a composition bias toward pro residues. Positions 476 to 489 (PEPRVPEPLRKQGR) are enriched in basic and acidic residues. Residues 511-523 (RNDSLSSDQSESV) show a composition bias toward polar residues. Ser-514 bears the Phosphoserine mark. The segment covering 529–541 (KPHRPKRGGKRRQ) has biased composition (basic residues). The segment covering 559–569 (SCEDVELESES) has biased composition (acidic residues). Ser-592 carries the phosphoserine modification. One can recognise a PDZ domain in the interval 619–705 (RTTMPKESGA…EPQVEIIVSR (87 aa)). Positions 712 to 746 (RIPESSHPPLESSSSSFESQKMERPSISVISPTSP) are disordered. Residues 714–730 (PESSHPPLESSSSSFES) show a composition bias toward low complexity. Ser-742 and Ser-745 each carry phosphoserine. The region spanning 756–879 (LPGQLSVKLW…ALLDDEPHWY (124 aa)) is the C2 1 domain. Residues 884–1201 (HDESSLPLPQ…RQLPQVPVRS (318 aa)) form a disordered region. The residue at position 895 (Ser-895) is a Phosphoserine. Residues 949-958 (ATTLTVPEQQ) show a composition bias toward polar residues. Ser-991 carries the phosphoserine modification. Residues 1006–1023 (RHHDASRSPADHRSRHVE) are compositionally biased toward basic and acidic residues. Ser-1045 is subject to Phosphoserine. Residues 1078–1092 (SPERERHSRKSERCS) show a composition bias toward basic and acidic residues. Residues 1173-1187 (QGSPTQSPPADTSFG) show a composition bias toward polar residues. Ser-1175 is modified (phosphoserine). Thr-1177 is modified (phosphothreonine). Phosphoserine is present on residues Ser-1179, Ser-1231, Ser-1233, Ser-1234, Ser-1262, Ser-1263, and Ser-1265. Residues 1256 to 1313 (DNASAKSSDSDVSDVSAISRASSTSRLSSTSFMSEQSERPRGRISSFTPKMQGRRMGT) form a disordered region. Over residues 1268-1289 (SDVSAISRASSTSRLSSTSFMS) the composition is skewed to low complexity. A Phosphoserine modification is found at Ser-1339. The disordered stretch occupies residues 1368–1397 (RSRSTSQLSQTESGHKKLKSTIQRSTETGM). One can recognise a C2 2 domain in the interval 1461 to 1579 (AMGDIQIGME…DLSSMVIGWY (119 aa)). 4 positions are modified to phosphoserine: Ser-1600, Ser-1603, Ser-1606, and Ser-1615.

Interacts with RAB3C, RAB10, RAB26 and RAB37. Binds SNAP25, SYT1 and CACNA1B. Interaction with SYT1 is enhanced by calcium ions. Interaction with SNAP25 is weaker in the presence of calcium ions. Binds RAB3A, RAB3B and RAB3D that have been activated by GTP-binding. Binds UNC13A. Interacts with TSPOAP1 and RIMBP2. Interacts with PPFIA3 and PPFIA4. Interacts with ERC1. Phosphorylated by BRSK1. Highly expressed in hippocampus, brain cortex, cerebellum and olfactory bulb. Detected at lower levels in midbrain, hindbrain and spinal cord. Detected retina and in spinal cord motor neurons.

It is found in the cell membrane. It localises to the synapse. Its subcellular location is the presynaptic cell membrane. Functionally, rab effector involved in exocytosis. May act as scaffold protein that regulates neurotransmitter release at the active zone. Essential for maintaining normal probability of neurotransmitter release and for regulating release during short-term synaptic plasticity. Plays a role in dendrite formation by melanocytes. This Rattus norvegicus (Rat) protein is Regulating synaptic membrane exocytosis protein 1 (Rims1).